The following is a 249-amino-acid chain: Zinc finger AN1 and C2H2 domain-containing stress-associated protein 13 (249 aa).

AN1-type zinc fingers lie at residues 7-55 (PDLG…RGDV) and 95-145 (AVKK…KPES). Positions 13, 18, 28, 31, 36, 39, 45, 47, 101, 106, 118, 121, 126, 129, 135, and 137 each coordinate Zn(2+). The tract at residues 194 to 213 (FASGNDGNSEKTQERNGKQN) is disordered. Basic and acidic residues predominate over residues 201 to 210 (NSEKTQERNG). Residues 220-243 (DVCPKCSRGFRDPVDLLKHIDKDH) form a C2H2-type zinc finger.

May be involved in environmental stress response. This Arabidopsis thaliana (Mouse-ear cress) protein is Zinc finger AN1 and C2H2 domain-containing stress-associated protein 13 (SAP13).